Reading from the N-terminus, the 109-residue chain is Prothymosin alpha (109 aa).

The disordered stretch occupies residues 1–109; that stretch reads MSDTSVDASV…AKKQKTDDDD (109 aa). The segment covering 9–35 has biased composition (basic and acidic residues); that stretch reads SVEKTTKDLKSKDKELVEETENGKDKP. Acidic residues predominate over residues 41 to 81; the sequence is ENEENGEDGADNEEEEEVDEEDEEDEGEGDDDEGDEDDEAD. The span at 99–109 shows a compositional bias: basic and acidic residues; the sequence is DAKKQKTDDDD.

This sequence belongs to the pro/parathymosin family. As to expression, highly expressed in the testis.

The protein resides in the nucleus. In terms of biological role, may have role in testicular activity. In Pelophylax lessonae (Pool frog), this protein is Prothymosin alpha.